The chain runs to 168 residues: Large ribosomal subunit protein uL16 (168 aa).

Belongs to the universal ribosomal protein uL16 family.

This chain is Large ribosomal subunit protein uL16, found in Thermofilum pendens (strain DSM 2475 / Hrk 5).